We begin with the raw amino-acid sequence, 458 residues long: Tetracycline resistance protein (458 aa).

12 helical membrane passes run 12–33 (HNQVLIWLCVLSFFSVLNEMVL), 81–100 (LLLFGIMVNGLGSIIGFVGH), 111–129 (FIQGIGAAAFPALVMVVVA), 140–162 (AFGLIGSLVAMGEGVGPAIGGMV), 165–185 (YIHWSYLLLIPTATIITVPFL), 201–221 (MAGIILMSAGIVFFMLFTTSY), 223–240 (FSFLIISILAFFIFVQHI), 256–276 (VFFVIGTLCGGLIFGTVAGFV), 297–317 (GIIFPGTMSVIIFGYIGGLLV), 324–344 (YVLTIGSALLSSGFLIAAFFI), 346–365 (AAPWIMTIIVIFVFGGLSFT), and 432–451 (MLILFAGIIVICWLVILNVY).

This sequence belongs to the major facilitator superfamily. TCR/Tet family.

The protein resides in the cell membrane. Functionally, resistance to tetracycline by an active tetracycline efflux. This is an energy-dependent process that decreases the accumulation of the antibiotic in whole cells. This protein functions as a metal-tetracycline/H(+) antiporter. In Bacillus subtilis (strain 168), this protein is Tetracycline resistance protein (tetB).